An 879-amino-acid polypeptide reads, in one-letter code: Phosphoenolpyruvate carboxylase (879 aa).

Active-site residues include histidine 138 and lysine 545.

The protein belongs to the PEPCase type 1 family. It depends on Mg(2+) as a cofactor.

It catalyses the reaction oxaloacetate + phosphate = phosphoenolpyruvate + hydrogencarbonate. In terms of biological role, forms oxaloacetate, a four-carbon dicarboxylic acid source for the tricarboxylic acid cycle. The protein is Phosphoenolpyruvate carboxylase of Haemophilus influenzae (strain 86-028NP).